Consider the following 322-residue polypeptide: ATP-dependent 6-phosphofructokinase (322 aa).

Gly-11 is an ATP binding site. ADP is bound at residue 21–25 (RAVVR). ATP-binding positions include 72-73 (RC) and 102-105 (GDGS). Residue Asp-103 participates in Mg(2+) binding. 127 to 129 (TID) contributes to the substrate binding site. Residue Asp-129 is the Proton acceptor of the active site. Arg-156 lines the ADP pocket. Substrate-binding positions include Arg-164 and 171–173 (MGR). Residues 187–189 (GAE), Arg-213, and 215–217 (KKH) contribute to the ADP site. Residues Glu-224, Arg-245, and 251–254 (HVQR) each bind substrate.

This sequence belongs to the phosphofructokinase type A (PFKA) family. ATP-dependent PFK group I subfamily. Prokaryotic clade 'B1' sub-subfamily. In terms of assembly, homotetramer. Mg(2+) is required as a cofactor.

It is found in the cytoplasm. The catalysed reaction is beta-D-fructose 6-phosphate + ATP = beta-D-fructose 1,6-bisphosphate + ADP + H(+). It participates in carbohydrate degradation; glycolysis; D-glyceraldehyde 3-phosphate and glycerone phosphate from D-glucose: step 3/4. Its activity is regulated as follows. Allosterically activated by ADP and other diphosphonucleosides, and allosterically inhibited by phosphoenolpyruvate. Its function is as follows. Catalyzes the phosphorylation of D-fructose 6-phosphate to fructose 1,6-bisphosphate by ATP, the first committing step of glycolysis. The protein is ATP-dependent 6-phosphofructokinase of Staphylococcus aureus (strain JH1).